We begin with the raw amino-acid sequence, 89 residues long: Putative ankyrin repeat protein RF_1157 (89 aa).

One copy of the ANK repeat lies at 2-32 (YNTTPLNFAINQENNEEVIKYLLANGANPRL).

This chain is Putative ankyrin repeat protein RF_1157, found in Rickettsia felis (strain ATCC VR-1525 / URRWXCal2) (Rickettsia azadi).